The primary structure comprises 450 residues: Nicotinamide phosphoribosyltransferase (450 aa).

Arginine 210 is a binding site for diphosphate. Aspartate 233 is a beta-nicotinamide D-ribonucleotide binding site. Positions 249 and 310 each coordinate diphosphate. Beta-nicotinamide D-ribonucleotide contacts are provided by residues 310-312, 364-365, and arginine 403; these read RAD and GD.

The protein belongs to the NAPRTase family.

The catalysed reaction is beta-nicotinamide D-ribonucleotide + diphosphate = 5-phospho-alpha-D-ribose 1-diphosphate + nicotinamide + H(+). The protein operates within cofactor biosynthesis; NAD(+) biosynthesis; nicotinamide D-ribonucleotide from 5-phospho-alpha-D-ribose 1-diphosphate and nicotinamide: step 1/1. Functionally, catalyzes the condensation of nicotinamide with 5-phosphoribosyl-1-pyrophosphate to yield nicotinamide mononucleotide, an intermediate in the biosynthesis of NAD. This Mycoplasma genitalium (strain ATCC 33530 / DSM 19775 / NCTC 10195 / G37) (Mycoplasmoides genitalium) protein is Nicotinamide phosphoribosyltransferase.